A 433-amino-acid chain; its full sequence is Ribosome biogenesis protein WDR12 homolog (433 aa).

M1 carries the post-translational modification N-acetylmethionine. A ubiquitin-like (UBL) domain region spans residues 12 to 96 (LHVKFVTKLD…ERTLEIEYIR (85 aa)). WD repeat units follow at residues 108-146 (LHDD…SHIL), 148-191 (GHSG…SVDS), 203-242 (GHKA…SEGE), 270-308 (GHTQ…DSLN), 310-350 (FCGK…TSAP), 356-396 (SHSS…PLSV), and 399-433 (THND…IAIS). The disordered stretch occupies residues 238 to 263 (TSEGESVSVKKRKGNNQAEESQSEGE).

It belongs to the WD repeat WDR12/YTM1 family. Interacts with PES. Interacts with BOP1.

It localises to the nucleus. The protein localises to the nucleolus. It is found in the nucleoplasm. In terms of biological role, required for maturation of ribosomal RNAs and formation of the large ribosomal subunit. The polypeptide is Ribosome biogenesis protein WDR12 homolog (Arabidopsis thaliana (Mouse-ear cress)).